A 338-amino-acid chain; its full sequence is Cytoskeleton protein RodZ (338 aa).

At 1–111 (MNTEATHDQN…LGKRRKKRDG (111 aa)) the chain is on the cytoplasmic side. The 53-residue stretch at 19 to 71 (LRNAREQLGLSQQAVAERLCLKVSTVRDIEEDKAPADLASTFLRGYIRSYARL) folds into the HTH cro/C1-type domain. Positions 30-49 (QQAVAERLCLKVSTVRDIEE) form a DNA-binding region, H-T-H motif. Residues 112 to 132 (WLMTFTWLVLFVVIGLSGAWW) form a helical; Signal-anchor for type II membrane protein membrane-spanning segment. At 133–338 (WQDHKAQQEE…TLNAEQSPAQ (206 aa)) the chain is on the periplasmic side. Residues 155–169 (NANGTNSQSIPLENS) show a composition bias toward polar residues. Residues 155–240 (NANGTNSQSI…TTPDTATPLP (86 aa)) form a disordered region. Over residues 170-188 (TTTVPEATPAPAAPVDTTA) the composition is skewed to low complexity. The span at 203–217 (EPQQNAVVPPSQANV) shows a compositional bias: polar residues. A compositionally biased stretch (low complexity) spans 218 to 240 (DTATTAPAAPATTTTPDTATPLP).

It belongs to the RodZ family.

It localises to the cell inner membrane. Cytoskeletal protein that is involved in cell-shape control through regulation of the length of the long axis. This Escherichia fergusonii (strain ATCC 35469 / DSM 13698 / CCUG 18766 / IAM 14443 / JCM 21226 / LMG 7866 / NBRC 102419 / NCTC 12128 / CDC 0568-73) protein is Cytoskeleton protein RodZ.